The chain runs to 823 residues: Leucine--tRNA ligase (823 aa).

Residues 42 to 52 (PYPSGTLHMGH) carry the 'HIGH' region motif. Residues 575 to 579 (KMSKS) carry the 'KMSKS' region motif. K578 provides a ligand contact to ATP.

Belongs to the class-I aminoacyl-tRNA synthetase family.

It is found in the cytoplasm. The catalysed reaction is tRNA(Leu) + L-leucine + ATP = L-leucyl-tRNA(Leu) + AMP + diphosphate. The polypeptide is Leucine--tRNA ligase (Legionella pneumophila (strain Corby)).